Here is a 121-residue protein sequence, read N- to C-terminus: uncharacterized protein (121 aa).

Residues L9–Y29 traverse the membrane as a helical segment. The tract at residues E91–P121 is disordered. Residues P98–P113 are compositionally biased toward low complexity.

The protein resides in the host membrane. This is an uncharacterized protein from Alcelaphine herpesvirus 1 (strain C500) (AlHV-1).